Consider the following 110-residue polypeptide: Inner kinetochore subunit mhf1 (110 aa).

It belongs to the TAF9 family. CENP-S/MHF1 subfamily. As to quaternary structure, the MHF histone-fold complex is a heterotetramer of 2 mhf1-mhf2 heterodimers. Component of the inner kinetochore constitutive centromere-associated network (CCAN) (also known as central kinetochore Sim4 complex in fission yeast), which is composed of at least cnl2, cnp3, cnp20, fta1, fta2, fta3, fta4, fta6, fta7, mal2, mhf1, mhf2, mis6, mis15, mis17, sim4 and wip1.

Its subcellular location is the nucleus. In terms of biological role, component of a FANCM-MHF complex that promotes gene conversion at blocked replication forks, probably by reversal of the stalled fork. FANCM-MHF promotes non-crossover recombination. The chain is Inner kinetochore subunit mhf1 from Schizosaccharomyces pombe (strain 972 / ATCC 24843) (Fission yeast).